The primary structure comprises 429 residues: Histidinol dehydrogenase (429 aa).

NAD(+) contacts are provided by Y130, Q191, and N214. 3 residues coordinate substrate: S237, Q259, and H262. Q259 and H262 together coordinate Zn(2+). Catalysis depends on proton acceptor residues E327 and H328. Substrate is bound by residues H328, D361, E415, and H420. D361 provides a ligand contact to Zn(2+). H420 serves as a coordination point for Zn(2+).

The protein belongs to the histidinol dehydrogenase family. Requires Zn(2+) as cofactor.

It catalyses the reaction L-histidinol + 2 NAD(+) + H2O = L-histidine + 2 NADH + 3 H(+). Its pathway is amino-acid biosynthesis; L-histidine biosynthesis; L-histidine from 5-phospho-alpha-D-ribose 1-diphosphate: step 9/9. In terms of biological role, catalyzes the sequential NAD-dependent oxidations of L-histidinol to L-histidinaldehyde and then to L-histidine. The protein is Histidinol dehydrogenase of Neisseria meningitidis serogroup B (strain ATCC BAA-335 / MC58).